Consider the following 134-residue polypeptide: Lymphocyte antigen 6F (134 aa).

A signal peptide spans 1–26 (MDSCHTTKSCVLILLVVLLCAERAQG). Residues 27 to 119 (LECYNCLGVS…TGGSTWTMTR (93 aa)) form the UPAR/Ly6 domain. Intrachain disulfides connect Cys-29–Cys-53, Cys-32–Cys-41, Cys-46–Cys-74, Cys-78–Cys-98, and Cys-99–Cys-104. Gly-112 carries the GPI-anchor amidated glycine lipid modification. Positions 113–134 (STWTMTRVLLLNLGSVFLQTLL) are cleaved as a propeptide — removed in mature form.

The protein localises to the cell membrane. This chain is Lymphocyte antigen 6F (Ly6f), found in Mus musculus (Mouse).